A 119-amino-acid chain; its full sequence is Ribonuclease P protein component (119 aa).

It belongs to the RnpA family. In terms of assembly, consists of a catalytic RNA component (M1 or rnpB) and a protein subunit.

It catalyses the reaction Endonucleolytic cleavage of RNA, removing 5'-extranucleotides from tRNA precursor.. In terms of biological role, RNaseP catalyzes the removal of the 5'-leader sequence from pre-tRNA to produce the mature 5'-terminus. It can also cleave other RNA substrates such as 4.5S RNA. The protein component plays an auxiliary but essential role in vivo by binding to the 5'-leader sequence and broadening the substrate specificity of the ribozyme. The chain is Ribonuclease P protein component from Streptococcus gordonii (strain Challis / ATCC 35105 / BCRC 15272 / CH1 / DL1 / V288).